Reading from the N-terminus, the 274-residue chain is Glutamate--cysteine ligase regulatory subunit (274 aa).

A Phosphoserine modification is found at Ser59. Lys263 is modified (N6-acetyllysine).

It belongs to the aldo/keto reductase family. Glutamate--cysteine ligase light chain subfamily. In terms of assembly, heterodimer of a catalytic heavy chain and a regulatory light chain.

The protein operates within sulfur metabolism; glutathione biosynthesis; glutathione from L-cysteine and L-glutamate: step 1/2. The polypeptide is Glutamate--cysteine ligase regulatory subunit (Gclm) (Mus musculus (Mouse)).